The chain runs to 279 residues: DegV domain-containing protein SACOL1460 (279 aa).

In terms of domain architecture, DegV spans 4-278 (QIIVTDSTSD…QGAIGLVVLK (275 aa)). Hexadecanoate is bound by residues Thr61 and Ser93.

Functionally, may bind long-chain fatty acids, such as palmitate, and may play a role in lipid transport or fatty acid metabolism. In Staphylococcus aureus (strain COL), this protein is DegV domain-containing protein SACOL1460.